A 194-amino-acid polypeptide reads, in one-letter code: Holliday junction branch migration complex subunit RuvA (194 aa).

The domain I stretch occupies residues 1–64; sequence MIGRITGLLL…EDVHLLFGFM (64 aa). Positions 65-140 are domain II; that stretch reads TEQERALFRQ…KIDPVAILSE (76 aa). Residues 140–143 form a flexible linker region; the sequence is EAGA. The interval 144–194 is domain III; the sequence is AASNVDKDILSALLALGYNGREVNRALEQLSEGVTVSDGIMQSLKFLSKVK.

The protein belongs to the RuvA family. Homotetramer. Forms an RuvA(8)-RuvB(12)-Holliday junction (HJ) complex. HJ DNA is sandwiched between 2 RuvA tetramers; dsDNA enters through RuvA and exits via RuvB. An RuvB hexamer assembles on each DNA strand where it exits the tetramer. Each RuvB hexamer is contacted by two RuvA subunits (via domain III) on 2 adjacent RuvB subunits; this complex drives branch migration. In the full resolvosome a probable DNA-RuvA(4)-RuvB(12)-RuvC(2) complex forms which resolves the HJ.

The protein resides in the cytoplasm. In terms of biological role, the RuvA-RuvB-RuvC complex processes Holliday junction (HJ) DNA during genetic recombination and DNA repair, while the RuvA-RuvB complex plays an important role in the rescue of blocked DNA replication forks via replication fork reversal (RFR). RuvA specifically binds to HJ cruciform DNA, conferring on it an open structure. The RuvB hexamer acts as an ATP-dependent pump, pulling dsDNA into and through the RuvAB complex. HJ branch migration allows RuvC to scan DNA until it finds its consensus sequence, where it cleaves and resolves the cruciform DNA. The polypeptide is Holliday junction branch migration complex subunit RuvA (Nitrosomonas eutropha (strain DSM 101675 / C91 / Nm57)).